Consider the following 294-residue polypeptide: MFSESDLKRLVEEVLVEMTTKEGANIKDTPVSQPTPTVVDEDGIIPDITEVDIRTNLLVDNPENAEEYLKMKKHTPARIGVGKAGTRYKTETILRFRADHAAAQDAVFTDVDEKILEEMNLETIQTMCSSKDEFITRPDLGRKISKEELSKLSSYKKNAQVQIYVSDGLSSKAVEANVKNILPALIQGLEGYGISVGKPFFVKLGRVGAMDVISEEFGADVTCVLIGERPGLVTAESMSAYIAYKGTVGMPESRRTVVSNIHKGGTPAVEAGAYIADIIKLMLEKKASGLDLKL.

Adenosylcob(III)alamin is bound by residues Val-207 and Glu-228.

This sequence belongs to the EutC family. In terms of assembly, the basic unit is a heterodimer which dimerizes to form tetramers. The heterotetramers trimerize; 6 large subunits form a core ring with 6 small subunits projecting outwards. Adenosylcob(III)alamin is required as a cofactor.

It localises to the bacterial microcompartment. It catalyses the reaction ethanolamine = acetaldehyde + NH4(+). It functions in the pathway amine and polyamine degradation; ethanolamine degradation. Its function is as follows. Catalyzes the deamination of various vicinal amino-alcohols to oxo compounds. Allows this organism to utilize ethanolamine as the sole source of nitrogen and carbon in the presence of external vitamin B12. This Clostridium tetani (strain Massachusetts / E88) protein is Ethanolamine ammonia-lyase small subunit.